Here is an 80-residue protein sequence, read N- to C-terminus: RNA-binding protein Hfq (80 aa).

Residues 9-69 enclose the Sm domain; it reads DVFLNQVRKE…VSTISPNSPV (61 aa).

It belongs to the Hfq family. As to quaternary structure, homohexamer.

In terms of biological role, RNA chaperone that binds small regulatory RNA (sRNAs) and mRNAs to facilitate mRNA translational regulation in response to envelope stress, environmental stress and changes in metabolite concentrations. Also binds with high specificity to tRNAs. In Alkaliphilus oremlandii (strain OhILAs) (Clostridium oremlandii (strain OhILAs)), this protein is RNA-binding protein Hfq.